The following is a 398-amino-acid chain: MAKLTVKDVDLKGKKVLVRVDFNVPLKDGVITNDNRITAALPTIKYIIEQGGRAILFSHLGRVKEEADKEGKSLAPVAADLAAKLGQDVVFPGVTRGSKLEEAINALEDGQVLLVENTRFEDVDGKKESKNDEELGKYWASLGDGIFVNDAFGTAHRAHASNVGISANVEKAVAGFLLENEIAYIQEAVETPERPFVAILGGSKVSDKIGVIENLLEKADKVLIGGGMTYTFYKAQGIEIGNSLVEEDKLDVAKDLLEKSNGKLILPVDSKEANAFAGYTEVRDTEGEAVSKGFLGLDIGPKSIAEFDQALTGAKTVVWNGPMGVFENPDFQAGTIGVMDAIVKQPGVKSIIGGGDSAAAAINLGRADKFSWISTGGGASMELLEGKVLPGLAALTEK.

Residues 21–23 (DFN), Arg36, 59–62 (HLGR), Arg119, and Arg157 each bind substrate. Residues Lys208, Gly296, Glu327, and 354-357 (GGDS) each bind ATP.

Belongs to the phosphoglycerate kinase family. In terms of assembly, monomer.

The protein localises to the cytoplasm. The enzyme catalyses (2R)-3-phosphoglycerate + ATP = (2R)-3-phospho-glyceroyl phosphate + ADP. Its pathway is carbohydrate degradation; glycolysis; pyruvate from D-glyceraldehyde 3-phosphate: step 2/5. The chain is Phosphoglycerate kinase from Streptococcus pyogenes serotype M18 (strain MGAS8232).